The chain runs to 411 residues: LL-diaminopimelate aminotransferase (411 aa).

Substrate contacts are provided by Tyr16 and Gly43. Pyridoxal 5'-phosphate is bound by residues Tyr73, 109–110 (AK), Tyr133, Asn188, Tyr219, and 247–249 (SFS). Substrate is bound by residues Lys110, Tyr133, and Asn188. Residue Lys250 is modified to N6-(pyridoxal phosphate)lysine. Pyridoxal 5'-phosphate is bound by residues Arg258 and Asn293. Asn293 and Arg389 together coordinate substrate.

The protein belongs to the class-I pyridoxal-phosphate-dependent aminotransferase family. LL-diaminopimelate aminotransferase subfamily. In terms of assembly, homodimer. The cofactor is pyridoxal 5'-phosphate.

The enzyme catalyses (2S,6S)-2,6-diaminopimelate + 2-oxoglutarate = (S)-2,3,4,5-tetrahydrodipicolinate + L-glutamate + H2O + H(+). Its pathway is amino-acid biosynthesis; L-lysine biosynthesis via DAP pathway; LL-2,6-diaminopimelate from (S)-tetrahydrodipicolinate (aminotransferase route): step 1/1. In terms of biological role, involved in the synthesis of meso-diaminopimelate (m-DAP or DL-DAP), required for both lysine and peptidoglycan biosynthesis. Catalyzes the direct conversion of tetrahydrodipicolinate to LL-diaminopimelate. The polypeptide is LL-diaminopimelate aminotransferase (Methanobrevibacter smithii (strain ATCC 35061 / DSM 861 / OCM 144 / PS)).